Consider the following 252-residue polypeptide: Glycerol-3-phosphate acyltransferase (252 aa).

6 helical membrane passes run 6–26 (SVAMAYILTLIISPLYSYLIG), 66–86 (ILTLFLDIVKPIITISLTYII), 104–124 (AILVYFGGIFTIIGHCYPIFF), 140–160 (ITIDPIVAVIGIITLLIILLI), 164–184 (MSLSAMITATITCFLVLIPGI), and 204–224 (VIKGTWYVWLFLLISASILIY).

Belongs to the PlsY family. As to quaternary structure, probably interacts with PlsX.

It is found in the cell membrane. The enzyme catalyses an acyl phosphate + sn-glycerol 3-phosphate = a 1-acyl-sn-glycero-3-phosphate + phosphate. It participates in lipid metabolism; phospholipid metabolism. Functionally, catalyzes the transfer of an acyl group from acyl-phosphate (acyl-PO(4)) to glycerol-3-phosphate (G3P) to form lysophosphatidic acid (LPA). This enzyme utilizes acyl-phosphate as fatty acyl donor, but not acyl-CoA or acyl-ACP. This chain is Glycerol-3-phosphate acyltransferase, found in Ureaplasma urealyticum serovar 10 (strain ATCC 33699 / Western).